We begin with the raw amino-acid sequence, 576 residues long: Colicin-E7 (576 aa).

Disordered regions lie at residues 1–75, 421–478, and 506–557; these read MSGG…GGGS, SSAL…PVPD, and DPEL…GVYD. The segment covering 19–35 has biased composition (gly residues); sequence NINGGPTGLGGNGGASD. The segment covering 36–45 has biased composition (low complexity); that stretch reads GSGWSSENNP. Residues 46–75 are compositionally biased toward gly residues; sequence WGGGSGSGVHWGGGSGHGNGGGNSNSGGGS. 2 stretches are compositionally biased toward basic and acidic residues: residues 424 to 447 and 535 to 548; these read LERR…ESKR and SGKR…HEKP. Zn(2+) contacts are provided by H544, H569, and H573.

The protein belongs to the colicin/pyosin nuclease family.

This plasmid-coded bactericidal protein is an endonuclease active on both single- and double-stranded DNA but with undefined specificity. Its function is as follows. Colicins are polypeptide toxins produced by and active against E.coli and closely related bacteria. This chain is Colicin-E7 (colE7), found in Escherichia coli.